A 165-amino-acid polypeptide reads, in one-letter code: 2-C-methyl-D-erythritol 2,4-cyclodiphosphate synthase (165 aa).

A divalent metal cation is bound by residues Asp9 and His11. Residues 9 to 11 (DVH) and 35 to 36 (HS) contribute to the 4-CDP-2-C-methyl-D-erythritol 2-phosphate site. His43 lines the a divalent metal cation pocket. 4-CDP-2-C-methyl-D-erythritol 2-phosphate is bound by residues 57–59 (DIG), 101–107 (AQAPKML), 133–136 (TTTE), Phe140, and Arg143.

It belongs to the IspF family. As to quaternary structure, homotrimer. The cofactor is a divalent metal cation.

The catalysed reaction is 4-CDP-2-C-methyl-D-erythritol 2-phosphate = 2-C-methyl-D-erythritol 2,4-cyclic diphosphate + CMP. Its pathway is isoprenoid biosynthesis; isopentenyl diphosphate biosynthesis via DXP pathway; isopentenyl diphosphate from 1-deoxy-D-xylulose 5-phosphate: step 4/6. Its function is as follows. Involved in the biosynthesis of isopentenyl diphosphate (IPP) and dimethylallyl diphosphate (DMAPP), two major building blocks of isoprenoid compounds. Catalyzes the conversion of 4-diphosphocytidyl-2-C-methyl-D-erythritol 2-phosphate (CDP-ME2P) to 2-C-methyl-D-erythritol 2,4-cyclodiphosphate (ME-CPP) with a corresponding release of cytidine 5-monophosphate (CMP). The chain is 2-C-methyl-D-erythritol 2,4-cyclodiphosphate synthase from Pseudoalteromonas translucida (strain TAC 125).